A 488-amino-acid polypeptide reads, in one-letter code: Dipeptide and tripeptide permease B (488 aa).

At 1-27 (MSKTASVGLWDQPKPFFMIFFVELWER) the chain is on the cytoplasmic side. A helical membrane pass occupies residues 28–48 (FGFYGVQGILAIYFVQQLGFS). The Periplasmic segment spans residues 49-52 (EEQS). Residues 53-73 (FITFGAFTALVYGLISVGGYV) form a helical membrane-spanning segment. Over 74–82 (GDHILGTKR) the chain is Cytoplasmic. A helical transmembrane segment spans residues 83–103 (TIVLGAIVMAIGYYMIGLSIM). Over 104-106 (KPE) the chain is Periplasmic. The chain crosses the membrane as a helical span at residues 107 to 127 (LIFYALGTVAVGNGLFKANPA). The Cytoplasmic segment spans residues 128–146 (SLLAKCYQPQDPRLDGAFT). A helical membrane pass occupies residues 147–167 (LFYMSINLGSLFSLSLAPVIA). The Periplasmic segment spans residues 168-172 (EKYGY). The chain crosses the membrane as a helical span at residues 173–193 (TVTYNICGIGLIIALLVYIAC). Residues 194-211 (RRMVHNIGSAPDHHPVKP) are Cytoplasmic-facing. The chain crosses the membrane as a helical span at residues 212 to 232 (IGLIAVLIGSVVMVGVCAWLL). At 233 to 234 (HN) the chain is on the periplasmic side. Residues 235 to 255 (IKVANIALFAITTIVVLIFFW) traverse the membrane as a helical segment. At 256–267 (QAFKQNRVGRNK) the chain is on the cytoplasmic side. The helical transmembrane segment at 268–288 (MFVAFILMLQAVVFFILYNQM) threads the bilayer. The Periplasmic segment spans residues 289–311 (PMSLNFFAINNVHHQILGFDVNP). Residues 312-332 (VSFQAFNPFWIIIVSPILAVV) traverse the membrane as a helical segment. Residues 333 to 348 (YTKLGAKGKDFSMPAK) are Cytoplasmic-facing. The helical transmembrane segment at 349 to 369 (FTFGMFLCSLGFLTAAASGLF) threads the bilayer. The Periplasmic segment spans residues 370 to 378 (ADAQGITSP). Residues 379 to 399 (WFIVLVYLFQSVGELMISALG) traverse the membrane as a helical segment. Topologically, residues 400–423 (LAMVAAFVPSYLTGFILGMWFLSQ) are cytoplasmic. A helical transmembrane segment spans residues 424 to 444 (AVASMLASHVAALTATPVGVT). Residues 445 to 455 (DPLQTLPIYMS) lie on the Periplasmic side of the membrane. Residues 456-476 (VFGKIGVATLIVAIIMTFMVP) form a helical membrane-spanning segment. Residues 477-488 (WLNRIMREEVKA) lie on the Cytoplasmic side of the membrane.

This sequence belongs to the major facilitator superfamily. Proton-dependent oligopeptide transporter (POT/PTR) (TC 2.A.17) family. DtpB subfamily.

It is found in the cell inner membrane. Its function is as follows. Proton-dependent permease that transports di- and tripeptides. The chain is Dipeptide and tripeptide permease B from Xenorhabdus bovienii (strain SS-2004) (Xenorhabdus nematophila subsp. bovienii).